Consider the following 140-residue polypeptide: Nucleoside diphosphate kinase (140 aa).

Positions 11, 59, 87, 93, 104, and 114 each coordinate ATP. Catalysis depends on His-117, which acts as the Pros-phosphohistidine intermediate.

Belongs to the NDK family. As to quaternary structure, homotetramer. Requires Mg(2+) as cofactor.

The protein resides in the cytoplasm. It catalyses the reaction a 2'-deoxyribonucleoside 5'-diphosphate + ATP = a 2'-deoxyribonucleoside 5'-triphosphate + ADP. The catalysed reaction is a ribonucleoside 5'-diphosphate + ATP = a ribonucleoside 5'-triphosphate + ADP. In terms of biological role, major role in the synthesis of nucleoside triphosphates other than ATP. The ATP gamma phosphate is transferred to the NDP beta phosphate via a ping-pong mechanism, using a phosphorylated active-site intermediate. The polypeptide is Nucleoside diphosphate kinase (Nitrobacter hamburgensis (strain DSM 10229 / NCIMB 13809 / X14)).